The primary structure comprises 480 residues: Protein nucleotidyltransferase YdiU (480 aa).

ATP is bound by residues Gly84, Gly86, Arg87, Lys107, Asp119, Gly120, Arg170, and Arg177. Asp246 acts as the Proton acceptor in catalysis. The Mg(2+) site is built by Asn247 and Asp256. Asp256 is an ATP binding site.

It belongs to the SELO family. It depends on Mg(2+) as a cofactor. Requires Mn(2+) as cofactor.

The catalysed reaction is L-seryl-[protein] + ATP = 3-O-(5'-adenylyl)-L-seryl-[protein] + diphosphate. It carries out the reaction L-threonyl-[protein] + ATP = 3-O-(5'-adenylyl)-L-threonyl-[protein] + diphosphate. It catalyses the reaction L-tyrosyl-[protein] + ATP = O-(5'-adenylyl)-L-tyrosyl-[protein] + diphosphate. The enzyme catalyses L-histidyl-[protein] + UTP = N(tele)-(5'-uridylyl)-L-histidyl-[protein] + diphosphate. The catalysed reaction is L-seryl-[protein] + UTP = O-(5'-uridylyl)-L-seryl-[protein] + diphosphate. It carries out the reaction L-tyrosyl-[protein] + UTP = O-(5'-uridylyl)-L-tyrosyl-[protein] + diphosphate. In terms of biological role, nucleotidyltransferase involved in the post-translational modification of proteins. It can catalyze the addition of adenosine monophosphate (AMP) or uridine monophosphate (UMP) to a protein, resulting in modifications known as AMPylation and UMPylation. The polypeptide is Protein nucleotidyltransferase YdiU (Pseudoalteromonas atlantica (strain T6c / ATCC BAA-1087)).